The sequence spans 227 residues: UPF0173 metal-dependent hydrolase BCE33L4354 (227 aa).

Belongs to the UPF0173 family.

This is UPF0173 metal-dependent hydrolase BCE33L4354 from Bacillus cereus (strain ZK / E33L).